We begin with the raw amino-acid sequence, 654 residues long: Pentatricopeptide repeat-containing protein At4g19191, mitochondrial (654 aa).

Residues 1 to 65 constitute a mitochondrion transit peptide; sequence MSLIHRRLYR…PFVAKACARL (65 aa). 13 PPR repeats span residues 86–116, 117–151, 152–186, 187–217, 220–254, 255–289, 290–320, 321–355, 356–390, 392–422, 423–457, 458–488, and 494–524; these read DVFVGTATVDMFVKCNSVDYAAKVFERMPER, DATTWNAMLSGFCQSGHTDKAFSLFREMRLNEITP, DSVTVMTLIQSASFEKSLKLLEAMHAVGIRLGVDV, QVTVANTWISTYGKCGDLDSAKLVFEAIDRG, TVVSWNSMFKAYSVFGEAFDAFGLYCLMLREEFKP, DLSTFINLAASCQNPETLTQGRLIHSHAIHLGTDQ, DIEAINTFISMYSKSEDTCSARLLFDIMTSR, TCVSWTVMISGYAEKGDMDEALALFHAMIKSGEKP, DLVTLLSLISGCGKFGSLETGKWIDARADIYGCKR, NVMICNALIDMYSKCGSIHEARDIFDNTPEK, TVVTWTTMIAGYALNGIFLEALKLFSKMIDLDYKP, NHITFLAVLQACAHSGSLEKGWEYFHIMKQV, and GLDHYSCMVDLLGRKGKLEEALELIRNMSAK. Residues 529–604 form a type E motif region; sequence IWGALLNACK…YPGESVIQVN (76 aa). A type E(+) motif region spans residues 605 to 635; it reads GKNHSFTVGEHGHVENEVIYFTLNGLSLFAK.

The protein belongs to the PPR family. PCMP-E subfamily.

Its subcellular location is the mitochondrion. The chain is Pentatricopeptide repeat-containing protein At4g19191, mitochondrial (PCMP-E1) from Arabidopsis thaliana (Mouse-ear cress).